We begin with the raw amino-acid sequence, 1277 residues long: NPC intracellular cholesterol transporter 1 (1277 aa).

Residues 1–22 form the signal peptide; sequence MSARGPAFGLLLLLLCPVQVFS. Topologically, residues 23-269 are lumenal; sequence QSCVWYGECG…WRILGLDAMY (247 aa). Disulfide bonds link Cys25–Cys74, Cys31–Cys42, Cys63–Cys109, Cys75–Cys113, Cys97–Cys238, Cys100–Cys160, Cys177–Cys184, Cys227–Cys243, and Cys240–Cys247. Residue Asn41 participates in cholesterol binding. N-linked (GlcNAc...) asparagine glycosylation occurs at Asn70. Gln79 serves as a coordination point for cholesterol. 2 N-linked (GlcNAc...) asparagine glycosylation sites follow: Asn122 and Asn135. The tract at residues 175-205 is important for cholesterol binding and cholesterol transfer from NPC1 to liposomes; sequence LLCGREAQACNATNWIEYMFNKDNGQAPFTI. 2 N-linked (GlcNAc...) asparagine glycosylation sites follow: Asn185 and Asn222. The chain crosses the membrane as a helical span at residues 270–290; it reads VIMWSSYMAFLIVFFGAFFAV. Residues 291-350 are Cytoplasmic-facing; that stretch reads WCYRKRYFVSEYTPIDGNIAFSVNSSDKGQAFCCDPLGAAFERGLRRLFAQWGAFCVRHP. Residues 351-371 form a helical membrane-spanning segment; that stretch reads GCVVFFSLAFIVACSSGLVFI. At 372 to 621 the chain is on the lumenal side; that stretch reads RVTTDPVDLW…ELNRESNSDL (250 aa). 4 N-linked (GlcNAc...) asparagine glycosylation sites follow: Asn415, Asn452, Asn459, and Asn478. Cystine bridges form between Cys468–Cys479 and Cys516–Cys533. The SSD domain maps to 620–785; it reads DLFTILISYA…ITCFVSLLGL (166 aa). A helical transmembrane segment spans residues 622–642; the sequence is FTILISYAIMFLYISIALGHI. Topologically, residues 643–653 are cytoplasmic; it reads KSCSRLLVDSK. Residues 654–674 form a helical membrane-spanning segment; it reads ISLGIAGILIVLSSVACSLGI. The Lumenal portion of the chain corresponds to 675-677; the sequence is FSY. Residues 678-698 traverse the membrane as a helical segment; sequence IGVPLTLIVIEVIPFLVLAVG. Topologically, residues 699–734 are cytoplasmic; it reads VDNIFILVQTYQRDERLQGETLDQQLGRVLGEVAPS. The helical transmembrane segment at 735 to 755 threads the bilayer; sequence MFLSSFSETVAFFLGGLSVVP. Residues 756 to 759 are Lumenal-facing; sequence AVHT. A helical membrane pass occupies residues 760–780; sequence FSLFAGMAVLIDFLLQITCFV. The Cytoplasmic segment spans residues 781–832; that stretch reads SLLGLDIKRQEKNRLDVVCCVQGAEDGAGVQASESCLFRFFKNSYAPLLLKD. Residues 833-853 form a helical membrane-spanning segment; that stretch reads WMRPIVIAVFVGVLSFSIAVL. Topologically, residues 854–1097 are lumenal; that stretch reads NKVEIGLDQS…EQYLTVIDDT (244 aa). An N-linked (GlcNAc...) asparagine glycan is attached at Asn898. A disulfide bond links Cys909 and Cys914. N-linked (GlcNAc...) asparagine glycosylation is found at Asn916, Asn931, Asn961, Asn968, Asn1028, and Asn1063. 3 disulfides stabilise this stretch: Cys956–Cys1011, Cys957–Cys979, and Cys967–Cys976. A helical transmembrane segment spans residues 1098 to 1118; the sequence is IFNLGVSLGAIFLVTVVLMGC. At 1119-1123 the chain is on the cytoplasmic side; that stretch reads ELWAT. Residues 1124–1144 form a helical membrane-spanning segment; sequence VIMCVTIAMILVNMFGVMWLW. Gly1145 is a topological domain (lumenal). The helical transmembrane segment at 1146–1166 threads the bilayer; it reads ISLNAVSLVNLVMSCGISVEF. The Cytoplasmic portion of the chain corresponds to 1167–1194; that stretch reads CSHITRAFTLSTKGSRVDRAEEALAHMG. A helical transmembrane segment spans residues 1195-1215; it reads SSVFSGITLTKFGGIVVLAFA. Topologically, residues 1216–1226 are lumenal; it reads KSQIFQIFYFR. The chain crosses the membrane as a helical span at residues 1227–1247; the sequence is MYLAIVLLGATHGLIFLPVLL. At 1248–1277 the chain is on the cytoplasmic side; it reads SYIGPSINKAKSLATQERYKGTEREQLLNF. The segment at 1274-1277 is required for location in lysosomes; the sequence is LLNF. A Di-leucine motif motif is present at residues 1274 to 1277; the sequence is LLNF.

It belongs to the patched family. Interacts (via the second lumenal domain) with NPC2. Interacts with TMEM97; the interaction may decrease NPC1 availability to the cell. Interacts with TIM1. Interacts with SLC38A9; this interaction inhibits cholesterol-mediated mTORC1 activation via its sterol transport activity. N-glycosylated. As to expression, detected in corpus luteum, granulosa cells and adrenal gland.

Its subcellular location is the late endosome membrane. It localises to the lysosome membrane. It catalyses the reaction cholesterol(in) = cholesterol(out). Its function is as follows. Intracellular cholesterol transporter which acts in concert with NPC2 and plays an important role in the egress of cholesterol from the endosomal/lysosomal compartment. Unesterified cholesterol that has been released from LDLs in the lumen of the late endosomes/lysosomes is transferred by NPC2 to the cholesterol-binding pocket in the N-terminal domain of NPC1. Cholesterol binds to NPC1 with the hydroxyl group buried in the binding pocket. Binds oxysterol with higher affinity than cholesterol. May play a role in vesicular trafficking in glia, a process that may be crucial for maintaining the structural and functional integrity of nerve terminals. Inhibits cholesterol-mediated mTORC1 activation throught its interaction with SLC38A9. In Sus scrofa (Pig), this protein is NPC intracellular cholesterol transporter 1.